The sequence spans 434 residues: Vi polysaccharide export inner-membrane protein VexD (434 aa).

Positions methionine 1–proline 50 are enriched in basic and acidic residues. The interval methionine 1–aspartate 58 is disordered. 2 helical membrane-spanning segments follow: residues leucine 84–serine 104 and tryptophan 409–isoleucine 429.

Belongs to the BexC/CtrB/KpsE family.

The protein localises to the cell inner membrane. In terms of biological role, may form an ATP-driven capsule polysaccharide export apparatus, in association with the VexA, VexB and VexC proteins. This is Vi polysaccharide export inner-membrane protein VexD (vexD) from Salmonella typhi.